The sequence spans 449 residues: Allantoinase (449 aa).

Zn(2+)-binding residues include H61, H63, K148, H184, H240, and D313. An N6-carboxylysine modification is found at K148.

Belongs to the metallo-dependent hydrolases superfamily. Allantoinase family. In terms of assembly, homotetramer. The cofactor is Zn(2+). Post-translationally, carboxylation allows a single lysine to coordinate two zinc ions.

It catalyses the reaction (S)-allantoin + H2O = allantoate + H(+). Its pathway is nitrogen metabolism; (S)-allantoin degradation; allantoate from (S)-allantoin: step 1/1. Its function is as follows. Catalyzes the conversion of allantoin (5-ureidohydantoin) to allantoic acid by hydrolytic cleavage of the five-member hydantoin ring. The protein is Allantoinase of Desulfitobacterium hafniense (strain Y51).